We begin with the raw amino-acid sequence, 157 residues long: UPF0587 protein C2D10.03c (157 aa).

Residues Cys-34, Cys-37, Cys-68, and Cys-71 each coordinate Zn(2+).

This sequence belongs to the UPF0587 family.

This Schizosaccharomyces pombe (strain 972 / ATCC 24843) (Fission yeast) protein is UPF0587 protein C2D10.03c.